The sequence spans 63 residues: Large ribosomal subunit protein uL29 (63 aa).

The protein belongs to the universal ribosomal protein uL29 family.

This Bordetella pertussis (strain Tohama I / ATCC BAA-589 / NCTC 13251) protein is Large ribosomal subunit protein uL29.